The primary structure comprises 402 residues: MKRLQAFKFQLRPGGQQECEMRRFAGACRFVFNRALARQNENHEAGNKYIPYGKMASWLVEWKNATETQWLKDSPSQPLQQSLKDLERAYKNFFRKRAAFPRFKKRGQNDAFRYPQGVKLDQENSRIFLPKLGWMRYRNSRQVTGVVKNVTVSQSCGKWYISIQTESEVSTPVHPSASMVGLDAGVAKLATLSDGTVFEPVNSFQKNQKKLARLQRQLSRKVKFSNNWQKQKRKIQRLHSCIANIRRDYLHKVTTAVSKNHAMIVIEDLKVSNMSKSAAGTVSQPGRNVRAKSGLNRSILDQGWYEMRRQLAYKQLWRGGQVLAVPPAYTSQRCAYCGHTAKENRLSQSKFRCQVCGYTANADVNGARNILAAGHAVLACGEMVQSGRPLKQEPTEMIQATA.

Catalysis depends on residues Asp-183 and Glu-267. Positions 334, 337, 353, and 356 each coordinate Zn(2+). The active site involves Asp-363.

It in the N-terminal section; belongs to the transposase 2 family. This sequence in the C-terminal section; belongs to the transposase 35 family.

Its function is as follows. An RNA-guided dsDNA endonuclease. When guided by an RNA derived from the right-end element of its insertion sequence element (IS), cleaves DNA downstream of the transposon-associated motif (TAM). Cleaves supercoiled and linear DNA in a staggered manner 15-21 bases from the TAM yielding 5'-overhangs. Binds reRNA, an approximately 150 nucleotide base sRNA derived from the 3' end of its own gene, the right end (RE) of the insertion sequence (IS) plus sequence downstream of the IS. Not required for transposition of the insertion element. The corresponding transposase in strains MG1655 and W3110 is a truncated pseudogene (yncK). The protein is Putative RNA-guided DNA endonuclease InsQ (insQ) of Escherichia coli (strain K12).